A 520-amino-acid chain; its full sequence is GMP synthase [glutamine-hydrolyzing] (520 aa).

The 194-residue stretch at 9–202 folds into the Glutamine amidotransferase type-1 domain; that stretch reads TILIIDFGSQ…VHRIVGVKPG (194 aa). C86 acts as the Nucleophile in catalysis. Residues H176 and E178 contribute to the active site. Residues 203–395 enclose the GMPS ATP-PPase domain; it reads WTMGAYREQA…LGLPDSFIGR (193 aa). 230–236 contributes to the ATP binding site; the sequence is SGGVDSS.

Homodimer.

It catalyses the reaction XMP + L-glutamine + ATP + H2O = GMP + L-glutamate + AMP + diphosphate + 2 H(+). The protein operates within purine metabolism; GMP biosynthesis; GMP from XMP (L-Gln route): step 1/1. Catalyzes the synthesis of GMP from XMP. The polypeptide is GMP synthase [glutamine-hydrolyzing] (Brucella abortus (strain S19)).